A 1109-amino-acid polypeptide reads, in one-letter code: Carbamoyl phosphate synthase large chain (1109 aa).

Residues 1 to 402 (MPKRTDLKSV…ALQKALRSLE (402 aa)) are carboxyphosphate synthetic domain. 12 residues coordinate ATP: R129, R169, G175, G176, E208, I210, E215, G241, V242, H243, Q285, and E299. The 196-residue stretch at 133-328 (KGVVERCGAE…IAKIATKLSL (196 aa)) folds into the ATP-grasp 1 domain. 3 residues coordinate Mg(2+): Q285, E299, and N301. Mn(2+)-binding residues include Q285, E299, and N301. The oligomerization domain stretch occupies residues 403–546 (QKGSQLDFSS…YHYSAYDEED (144 aa)). The segment at 547–950 (EVALHSKPSI…AFAKSQAGAN (404 aa)) is carbamoyl phosphate synthetic domain. The region spanning 677 to 868 (SRVLDKAGLV…MAKAAALIGT (192 aa)) is the ATP-grasp 2 domain. R713, R752, L754, E759, G784, I785, H786, S787, Q827, and E839 together coordinate ATP. 3 residues coordinate Mg(2+): Q827, E839, and N841. Residues Q827, E839, and N841 each contribute to the Mn(2+) site. Positions 951 to 1096 (NALPTEGKVF…QEHAAALGES (146 aa)) constitute an MGS-like domain. The allosteric domain stretch occupies residues 951-1109 (NALPTEGKVF…AAAKADLQHA (159 aa)).

The protein belongs to the CarB family. In terms of assembly, composed of two chains; the small (or glutamine) chain promotes the hydrolysis of glutamine to ammonia, which is used by the large (or ammonia) chain to synthesize carbamoyl phosphate. Tetramer of heterodimers (alpha,beta)4. Requires Mg(2+) as cofactor. It depends on Mn(2+) as a cofactor.

It catalyses the reaction hydrogencarbonate + L-glutamine + 2 ATP + H2O = carbamoyl phosphate + L-glutamate + 2 ADP + phosphate + 2 H(+). It carries out the reaction hydrogencarbonate + NH4(+) + 2 ATP = carbamoyl phosphate + 2 ADP + phosphate + 2 H(+). It functions in the pathway amino-acid biosynthesis; L-arginine biosynthesis; carbamoyl phosphate from bicarbonate: step 1/1. Its pathway is pyrimidine metabolism; UMP biosynthesis via de novo pathway; (S)-dihydroorotate from bicarbonate: step 1/3. In terms of biological role, large subunit of the glutamine-dependent carbamoyl phosphate synthetase (CPSase). CPSase catalyzes the formation of carbamoyl phosphate from the ammonia moiety of glutamine, carbonate, and phosphate donated by ATP, constituting the first step of 2 biosynthetic pathways, one leading to arginine and/or urea and the other to pyrimidine nucleotides. The large subunit (synthetase) binds the substrates ammonia (free or transferred from glutamine from the small subunit), hydrogencarbonate and ATP and carries out an ATP-coupled ligase reaction, activating hydrogencarbonate by forming carboxy phosphate which reacts with ammonia to form carbamoyl phosphate. This chain is Carbamoyl phosphate synthase large chain, found in Pseudarthrobacter chlorophenolicus (strain ATCC 700700 / DSM 12829 / CIP 107037 / JCM 12360 / KCTC 9906 / NCIMB 13794 / A6) (Arthrobacter chlorophenolicus).